Reading from the N-terminus, the 379-residue chain is Lipid-A-disaccharide synthase (379 aa).

Belongs to the LpxB family.

The catalysed reaction is a lipid X + a UDP-2-N,3-O-bis[(3R)-3-hydroxyacyl]-alpha-D-glucosamine = a lipid A disaccharide + UDP + H(+). It participates in bacterial outer membrane biogenesis; LPS lipid A biosynthesis. Functionally, condensation of UDP-2,3-diacylglucosamine and 2,3-diacylglucosamine-1-phosphate to form lipid A disaccharide, a precursor of lipid A, a phosphorylated glycolipid that anchors the lipopolysaccharide to the outer membrane of the cell. The chain is Lipid-A-disaccharide synthase from Pseudomonas fluorescens (strain SBW25).